Reading from the N-terminus, the 158-residue chain is Protein-export protein SecB (158 aa).

Belongs to the SecB family. Homotetramer, a dimer of dimers. One homotetramer interacts with 1 SecA dimer.

It is found in the cytoplasm. Its function is as follows. One of the proteins required for the normal export of preproteins out of the cell cytoplasm. It is a molecular chaperone that binds to a subset of precursor proteins, maintaining them in a translocation-competent state. It also specifically binds to its receptor SecA. The sequence is that of Protein-export protein SecB from Rhodopseudomonas palustris (strain BisB5).